The sequence spans 137 residues: MSDSAGLIAHNWGFAIFLLGVVGLCAFMLGLSSLLGSKAWGRAKNEPFESGMLPVGSARLRLSAKFYLVAMLFVIFDIEALFLFAWSVSVRESGWTGFVEALVFIAILLAGLVYLWRVGALDWAPEGRRKRQAKLKQ.

3 consecutive transmembrane segments (helical) span residues 12–32 (WGFA…LGLS), 66–86 (FYLV…LFAW), and 95–115 (WTGF…LVYL).

It belongs to the complex I subunit 3 family. As to quaternary structure, NDH-1 is composed of 13 different subunits. Subunits NuoA, H, J, K, L, M, N constitute the membrane sector of the complex.

Its subcellular location is the cell inner membrane. It carries out the reaction a quinone + NADH + 5 H(+)(in) = a quinol + NAD(+) + 4 H(+)(out). Functionally, NDH-1 shuttles electrons from NADH, via FMN and iron-sulfur (Fe-S) centers, to quinones in the respiratory chain. The immediate electron acceptor for the enzyme in this species is believed to be ubiquinone. Couples the redox reaction to proton translocation (for every two electrons transferred, four hydrogen ions are translocated across the cytoplasmic membrane), and thus conserves the redox energy in a proton gradient. The chain is NADH-quinone oxidoreductase subunit A from Pseudomonas putida (strain ATCC 700007 / DSM 6899 / JCM 31910 / BCRC 17059 / LMG 24140 / F1).